Consider the following 290-residue polypeptide: Acetyl-coenzyme A carboxylase carboxyl transferase subunit beta (290 aa).

In terms of domain architecture, CoA carboxyltransferase N-terminal spans 30–290 (IMTKCPKCKK…HAGQEVNKDA (261 aa)). Zn(2+) contacts are provided by Cys34, Cys37, Cys53, and Cys56. A C4-type zinc finger spans residues 34-56 (CPKCKKIMYTKELSENLNVCFNC).

It belongs to the AccD/PCCB family. As to quaternary structure, acetyl-CoA carboxylase is a heterohexamer composed of biotin carboxyl carrier protein (AccB), biotin carboxylase (AccC) and two subunits each of ACCase subunit alpha (AccA) and ACCase subunit beta (AccD). Zn(2+) is required as a cofactor.

It is found in the cytoplasm. It carries out the reaction N(6)-carboxybiotinyl-L-lysyl-[protein] + acetyl-CoA = N(6)-biotinyl-L-lysyl-[protein] + malonyl-CoA. It participates in lipid metabolism; malonyl-CoA biosynthesis; malonyl-CoA from acetyl-CoA: step 1/1. Functionally, component of the acetyl coenzyme A carboxylase (ACC) complex. Biotin carboxylase (BC) catalyzes the carboxylation of biotin on its carrier protein (BCCP) and then the CO(2) group is transferred by the transcarboxylase to acetyl-CoA to form malonyl-CoA. The chain is Acetyl-coenzyme A carboxylase carboxyl transferase subunit beta from Staphylococcus carnosus (strain TM300).